A 374-amino-acid polypeptide reads, in one-letter code: Ribosomal RNA large subunit methyltransferase G (374 aa).

It belongs to the methyltransferase superfamily. RlmG family.

It is found in the cytoplasm. The catalysed reaction is guanosine(1835) in 23S rRNA + S-adenosyl-L-methionine = N(2)-methylguanosine(1835) in 23S rRNA + S-adenosyl-L-homocysteine + H(+). Functionally, specifically methylates the guanine in position 1835 (m2G1835) of 23S rRNA. This chain is Ribosomal RNA large subunit methyltransferase G, found in Pseudomonas syringae pv. syringae (strain B728a).